The primary structure comprises 399 residues: Leu/Ile/Val-binding protein homolog 7 (399 aa).

An N-terminal signal peptide occupies residues 1–22 (MEKHLIALSVAALQAGAAPASA).

It belongs to the leucine-binding protein family.

Functionally, component of an amino-acid transport system. This chain is Leu/Ile/Val-binding protein homolog 7, found in Brucella abortus (strain 2308).